We begin with the raw amino-acid sequence, 341 residues long: S-adenosylmethionine:tRNA ribosyltransferase-isomerase (341 aa).

The protein belongs to the QueA family. As to quaternary structure, monomer.

Its subcellular location is the cytoplasm. The enzyme catalyses 7-aminomethyl-7-carbaguanosine(34) in tRNA + S-adenosyl-L-methionine = epoxyqueuosine(34) in tRNA + adenine + L-methionine + 2 H(+). The protein operates within tRNA modification; tRNA-queuosine biosynthesis. Its function is as follows. Transfers and isomerizes the ribose moiety from AdoMet to the 7-aminomethyl group of 7-deazaguanine (preQ1-tRNA) to give epoxyqueuosine (oQ-tRNA). The protein is S-adenosylmethionine:tRNA ribosyltransferase-isomerase of Clostridium perfringens (strain ATCC 13124 / DSM 756 / JCM 1290 / NCIMB 6125 / NCTC 8237 / Type A).